A 77-amino-acid chain; its full sequence is Acyl carrier protein (77 aa).

Residues 1-76 (MENFDKVKDI…DAVNFINNLE (76 aa)) form the Carrier domain. Position 36 is an O-(pantetheine 4'-phosphoryl)serine (S36).

Belongs to the acyl carrier protein (ACP) family. Post-translationally, 4'-phosphopantetheine is transferred from CoA to a specific serine of apo-ACP by AcpS. This modification is essential for activity because fatty acids are bound in thioester linkage to the sulfhydryl of the prosthetic group.

It localises to the cytoplasm. Its pathway is lipid metabolism; fatty acid biosynthesis. Carrier of the growing fatty acid chain in fatty acid biosynthesis. This Staphylococcus carnosus (strain TM300) protein is Acyl carrier protein.